The chain runs to 1335 residues: Bifunctional autolysin (1335 aa).

The N-terminal stretch at Met1 to Ala29 is a signal peptide. 3 disordered regions span residues Gln51–Thr88, Asn100–Glu262, and Trp514–Leu535. Composition is skewed to polar residues over residues Glu58–Thr88, Asn100–Asn127, Thr143–Ala155, Thr176–Gly223, and Ser244–Tyr258. The interval Val303 to Lys863 is N-acetylmuramoyl-L-alanine amidase. Residues Gly515–Thr531 are compositionally biased toward low complexity. GW domains are found at residues Asn533 to Ala610, Ala612 to Lys686, Thr700 to Ala774, Ser776 to Lys850, Ser868 to Ile943, Lys945 to Thr1020, and Gln1023 to Ile1096. The segment at Gln864–Lys1335 is endo-beta-N-acetylglucosaminidase.

This sequence in the N-terminal section; belongs to the N-acetylmuramoyl-L-alanine amidase 2 family. In the C-terminal section; belongs to the glycosyl hydrolase 73 family. Oligomer; forms a ring structure at the cell surface which is important for efficient partitioning of daughter cells after cell division. Post-translationally, undergoes proteolytic processing to generate the two extracellular lytic enzymes, probably at the septal region on the cell surface.

It localises to the secreted. It carries out the reaction Hydrolyzes the link between N-acetylmuramoyl residues and L-amino acid residues in certain cell-wall glycopeptides.. The catalysed reaction is an N(4)-(oligosaccharide-(1-&gt;3)-[oligosaccharide-(1-&gt;6)]-beta-D-Man-(1-&gt;4)-beta-D-GlcNAc-(1-&gt;4)-alpha-D-GlcNAc)-L-asparaginyl-[protein] + H2O = an oligosaccharide-(1-&gt;3)-[oligosaccharide-(1-&gt;6)]-beta-D-Man-(1-&gt;4)-D-GlcNAc + N(4)-(N-acetyl-beta-D-glucosaminyl)-L-asparaginyl-[protein]. Endohydrolysis of the di-N-acetylchitobiosyl unit in high-mannose glycopeptides and glycoproteins containing the -[(Man)5(GlcNAc)2]-Asn structure. One N-acetyl-D-glucosamine residue remains attached to the protein; the rest of the oligosaccharide is released intact. Cleaves the peptidoglycan connecting the daughter cells at the end of the cell division cycle, resulting in the separation of the two newly divided cells. Acts as an autolysin in penicillin-induced lysis. As a bacterial surface-associated protein, mediates attachment to polystyrene surfaces, contributing to biofilm formation. Also has vitronectin-binding activity. The protein is Bifunctional autolysin (atl) of Staphylococcus epidermidis.